The following is a 338-amino-acid chain: Lipoate-protein ligase A (338 aa).

The BPL/LPL catalytic domain occupies 29–216 (PATQRVLFLW…AFFAHYGERV (188 aa)). Residues arginine 71, 76–79 (GAVF), and lysine 134 contribute to the ATP site. Lysine 134 is a (R)-lipoate binding site.

The protein belongs to the LplA family. In terms of assembly, monomer.

It localises to the cytoplasm. It catalyses the reaction L-lysyl-[lipoyl-carrier protein] + (R)-lipoate + ATP = N(6)-[(R)-lipoyl]-L-lysyl-[lipoyl-carrier protein] + AMP + diphosphate + H(+). Its pathway is protein modification; protein lipoylation via exogenous pathway; protein N(6)-(lipoyl)lysine from lipoate: step 1/2. It functions in the pathway protein modification; protein lipoylation via exogenous pathway; protein N(6)-(lipoyl)lysine from lipoate: step 2/2. Catalyzes both the ATP-dependent activation of exogenously supplied lipoate to lipoyl-AMP and the transfer of the activated lipoyl onto the lipoyl domains of lipoate-dependent enzymes. The sequence is that of Lipoate-protein ligase A from Salmonella schwarzengrund (strain CVM19633).